We begin with the raw amino-acid sequence, 211 residues long: Urease accessory protein UreG (211 aa).

Gly11 to Thr18 serves as a coordination point for GTP.

This sequence belongs to the SIMIBI class G3E GTPase family. UreG subfamily. Homodimer. UreD, UreF and UreG form a complex that acts as a GTP-hydrolysis-dependent molecular chaperone, activating the urease apoprotein by helping to assemble the nickel containing metallocenter of UreC. The UreE protein probably delivers the nickel.

Its subcellular location is the cytoplasm. Functionally, facilitates the functional incorporation of the urease nickel metallocenter. This process requires GTP hydrolysis, probably effectuated by UreG. This Actinobacillus pleuropneumoniae serotype 7 (strain AP76) protein is Urease accessory protein UreG.